We begin with the raw amino-acid sequence, 195 residues long: Putative CheY-P phosphatase CheC1 (195 aa).

The protein belongs to the CheC family.

Catalyzes the dephosphorylation of CheY-P. This Halobacterium salinarum (strain ATCC 29341 / DSM 671 / R1) protein is Putative CheY-P phosphatase CheC1 (cheC1).